The primary structure comprises 359 residues: tRNA/tmRNA (uracil-C(5))-methyltransferase (359 aa).

5 residues coordinate S-adenosyl-L-methionine: Q183, Y211, N216, E232, and D292. C317 functions as the Nucleophile in the catalytic mechanism. The active-site Proton acceptor is E351.

This sequence belongs to the class I-like SAM-binding methyltransferase superfamily. RNA M5U methyltransferase family. TrmA subfamily.

It carries out the reaction uridine(54) in tRNA + S-adenosyl-L-methionine = 5-methyluridine(54) in tRNA + S-adenosyl-L-homocysteine + H(+). The enzyme catalyses uridine(341) in tmRNA + S-adenosyl-L-methionine = 5-methyluridine(341) in tmRNA + S-adenosyl-L-homocysteine + H(+). Its function is as follows. Dual-specificity methyltransferase that catalyzes the formation of 5-methyluridine at position 54 (m5U54) in all tRNAs, and that of position 341 (m5U341) in tmRNA (transfer-mRNA). The chain is tRNA/tmRNA (uracil-C(5))-methyltransferase from Pseudomonas fluorescens (strain ATCC BAA-477 / NRRL B-23932 / Pf-5).